We begin with the raw amino-acid sequence, 155 residues long: DNA gyrase inhibitor (155 aa).

The protein belongs to the DNA gyrase inhibitor family. In terms of assembly, interacts with DNA gyrase.

Its subcellular location is the cytoplasm. Functionally, inhibits the supercoiling activity of DNA gyrase. Acts by inhibiting DNA gyrase at an early step, prior to (or at the step of) binding of DNA by the gyrase. It protects cells against toxins that target DNA gyrase, by inhibiting activity of these toxins and reducing the formation of lethal double-strand breaks in the cell. The chain is DNA gyrase inhibitor from Erwinia billingiae (strain Eb661).